The sequence spans 311 residues: GTPase Era (311 aa).

In terms of domain architecture, Era-type G spans 16–188 (HAGFVAIVGK…REQLLEVLPE (173 aa)). The interval 24 to 31 (GKPNVGKS) is G1. Residue 24–31 (GKPNVGKS) coordinates GTP. A G2 region spans residues 50–54 (QTTRR). The G3 stretch occupies residues 71–74 (DTPG). Residues 71–75 (DTPGL) and 133–136 (NKTD) each bind GTP. The segment at 133–136 (NKTD) is G4. Residues 166 to 168 (LSA) are G5. The region spanning 219 to 296 (LRDELPYAVA…YLGLEVIVIP (78 aa)) is the KH type-2 domain.

It belongs to the TRAFAC class TrmE-Era-EngA-EngB-Septin-like GTPase superfamily. Era GTPase family. Monomer.

It localises to the cytoplasm. The protein localises to the cell membrane. Functionally, an essential GTPase that binds both GDP and GTP, with rapid nucleotide exchange. Plays a role in 16S rRNA processing and 30S ribosomal subunit biogenesis and possibly also in cell cycle regulation and energy metabolism. The protein is GTPase Era of Deinococcus radiodurans (strain ATCC 13939 / DSM 20539 / JCM 16871 / CCUG 27074 / LMG 4051 / NBRC 15346 / NCIMB 9279 / VKM B-1422 / R1).